The chain runs to 686 residues: Myb-related protein B (686 aa).

The disordered stretch occupies residues 1–28 (MARRSRGEDQDELHCQDTDSDVPEQRDG). HTH myb-type domains lie at 26-77 (RDGR…LRVL), 78-133 (NPDL…NPEV), and 134-184 (KKSS…KRKV). 3 consecutive DNA-binding regions (H-T-H motif) follow at residues 54–77 (WKFLASHFPNRSDQQCQYRWLRVL), 106–129 (WTLIAKHLKGRLGKQCRERWHNHL), and 157–180 (WAEIAKLLPGRTDNAVKNHWNSTI). 2 disordered regions span residues 315 to 355 (CDLT…VTEY) and 493 to 512 (YVVDNTPHTPTPFKNALEKY). Over residues 326 to 343 (PSAGSSSSSNSPVRQTPS) the composition is skewed to low complexity.

Component of the DREAM complex. As to expression, expressed in hematopoietic and non hematopoietic cells.

The protein localises to the nucleus. Represses v-myb- and c-myb-mediated activation of the mim-1 gene, probably by competing with other myb proteins for binding sites. It is an inhibitory member of the myb family. The sequence is that of Myb-related protein B (MYBL2) from Gallus gallus (Chicken).